Consider the following 407-residue polypeptide: Transcriptional regulator UL34 (407 aa).

Positions 268–330 (AAGPPEADEN…ENEEEEEELF (63 aa)) are disordered. Positions 273–286 (EADENNDEGEEDDD) are enriched in acidic residues. The segment covering 287–301 (ELRHSDPAPLHDSKK) has biased composition (basic and acidic residues). Basic residues predominate over residues 302–312 (PRNARRPRTRV).

This sequence belongs to the HHV-5 UL34 protein family.

The protein resides in the host nucleus. Acts as a transcriptional repressor of the US3 gene expression through a specific DNA sequence named the transcriptional repressive element (tre). The chain is Transcriptional regulator UL34 (UL34) from Homo sapiens (Human).